Here is a 501-residue protein sequence, read N- to C-terminus: Flagellin (501 aa).

It belongs to the bacterial flagellin family.

The protein resides in the secreted. It localises to the bacterial flagellum. Flagellin is the subunit protein which polymerizes to form the filaments of bacterial flagella. The polypeptide is Flagellin (fliC) (Salmonella choleraesuis (strain SC-B67)).